A 223-amino-acid polypeptide reads, in one-letter code: Ribose-5-phosphate isomerase A (223 aa).

Residues 32 to 35, 85 to 88, and 98 to 101 contribute to the substrate site; these read TGST, DGAD, and KGGG. Glutamate 107 functions as the Proton acceptor in the catalytic mechanism. Lysine 125 lines the substrate pocket.

Belongs to the ribose 5-phosphate isomerase family. Homodimer.

It carries out the reaction aldehydo-D-ribose 5-phosphate = D-ribulose 5-phosphate. The protein operates within carbohydrate degradation; pentose phosphate pathway; D-ribose 5-phosphate from D-ribulose 5-phosphate (non-oxidative stage): step 1/1. In terms of biological role, catalyzes the reversible conversion of ribose-5-phosphate to ribulose 5-phosphate. The sequence is that of Ribose-5-phosphate isomerase A from Pseudomonas savastanoi pv. phaseolicola (strain 1448A / Race 6) (Pseudomonas syringae pv. phaseolicola (strain 1448A / Race 6)).